The primary structure comprises 101 residues: Interleukin-8 (101 aa).

Residues 1 to 22 form the signal peptide; it reads MTSKLAIALLAAFLLSAALCKA. Arg-27 is subject to Citrulline. Intrachain disulfides connect Cys-34/Cys-61 and Cys-36/Cys-77.

The protein belongs to the intercrine alpha (chemokine CxC) family. As to quaternary structure, homodimer. Citrullination at Arg-27 prevents proteolysis, and dampens tissue inflammation, it also enhances leukocytosis, possibly through impaired chemokine clearance from the blood circulation.

It localises to the secreted. Its function is as follows. Chemotactic factor that mediates inflammatory response by attracting neutrophils, basophils, and T-cells to clear pathogens and protect the host from infection. Also plays an important role in neutrophil activation. Released in response to an inflammatory stimulus, exerts its effect by binding to the G-protein-coupled receptors CXCR1 and CXCR2, primarily found in neutrophils, monocytes and endothelial cells. G-protein heterotrimer (alpha, beta, gamma subunits) constitutively binds to CXCR1/CXCR2 receptor and activation by IL8 leads to beta and gamma subunits release from Galpha (GNAI2 in neutrophils) and activation of several downstream signaling pathways including PI3K and MAPK pathways. The sequence is that of Interleukin-8 (CXCL8) from Tursiops truncatus (Atlantic bottle-nosed dolphin).